We begin with the raw amino-acid sequence, 625 residues long: Threonine--tRNA ligase (625 aa).

The tract at residues Met-1–Glu-147 is editing domain. The tract at residues Pro-206–Pro-505 is catalytic. Cys-298, His-350, and His-474 together coordinate Zn(2+).

This sequence belongs to the class-II aminoacyl-tRNA synthetase family. As to quaternary structure, homodimer. It depends on Zn(2+) as a cofactor.

It localises to the cytoplasm. The enzyme catalyses tRNA(Thr) + L-threonine + ATP = L-threonyl-tRNA(Thr) + AMP + diphosphate + H(+). Catalyzes the attachment of threonine to tRNA(Thr) in a two-step reaction: L-threonine is first activated by ATP to form Thr-AMP and then transferred to the acceptor end of tRNA(Thr). Also edits incorrectly charged L-seryl-tRNA(Thr). The chain is Threonine--tRNA ligase from Thermococcus sibiricus (strain DSM 12597 / MM 739).